A 189-amino-acid chain; its full sequence is Elongation factor P (189 aa).

The protein belongs to the elongation factor P family.

It localises to the cytoplasm. It functions in the pathway protein biosynthesis; polypeptide chain elongation. Functionally, involved in peptide bond synthesis. Stimulates efficient translation and peptide-bond synthesis on native or reconstituted 70S ribosomes in vitro. Probably functions indirectly by altering the affinity of the ribosome for aminoacyl-tRNA, thus increasing their reactivity as acceptors for peptidyl transferase. The protein is Elongation factor P of Campylobacter lari (strain RM2100 / D67 / ATCC BAA-1060).